The chain runs to 487 residues: Complement C1r subcomponent-like protein (487 aa).

The signal sequence occupies residues 1–35 (MPGPRVWGKYLWRSPHSKGCPGAMWWLLLWGVLQA). Positions 39–163 (RGSVLLAQEL…KGFLALYQTV (125 aa)) constitute a CUB domain. A disulfide bond links C94 and C112. 2 N-linked (GlcNAc...) asparagine glycosylation sites follow: N147 and N166. Residues 165–230 (VNYSQPISEA…DGEEVLQCMP (66 aa)) enclose the Sushi domain. A disulfide bridge links C195 with C228. An N-linked (GlcNAc...) (complex) asparagine glycan is attached at N242. A Peptidase S1 domain is found at 245–484 (TLGSSRAKLG…YVDWIKGVMN (240 aa)). H283 acts as the Charge relay system in catalysis. N-linked (GlcNAc...) asparagine glycosylation occurs at N296. The active-site Charge relay system is D339. N363 carries an N-linked (GlcNAc...) asparagine glycan. 2 cysteine pairs are disulfide-bonded: C402–C421 and C432–C462. Residue S436 is the Charge relay system of the active site.

It belongs to the peptidase S1 family. In terms of tissue distribution, highly expressed in placenta, liver, kidney, pancreas, moderately in lung, spleen, prostate, ovary, colon, and PBL, and weakly in heart, skeletal muscle, thymus, testis, and small intestine. Expressed in PC-3 (prostate adenocarcinoma) and SK-OV-3 (ovary adenocarcinoma) cells, but not in LoVo and HT-29 (colon adenocarcinoma), SMMC7721 (hepatocellular carcinoma), CaoV-3 (ovary adenocarcinoma), HeLa (cervix epithelioid carcinoma), MCF-7 (breast adenocarcinoma), U-251MG (glioma) or A-549 (lung carcinoma) cells. Widely expressed in myeloid leukemia cell lines, including K-562 (chronic myelogenous leukemia), THP-1 (myelomonocytic leukemia), HL-60 and NB4 (promyelocytic leukemia), and KG-1 (acute myelogenous leukemia) cells. Expressed mainly in the liver and in serum (at protein level).

Its subcellular location is the secreted. Its function is as follows. Mediates the proteolytic cleavage of HP/haptoglobin in the endoplasmic reticulum. In Homo sapiens (Human), this protein is Complement C1r subcomponent-like protein (C1RL).